A 134-amino-acid polypeptide reads, in one-letter code: Methylglyoxal synthase (134 aa).

The 134-residue stretch at 1 to 134 (MKIALIAHDR…DWRLIQERRN (134 aa)) folds into the MGS-like domain. Residues histidine 8, lysine 12, 34–37 (TGTT), and 54–55 (SG) each bind substrate. Aspartate 60 serves as the catalytic Proton donor/acceptor. Histidine 87 contacts substrate.

This sequence belongs to the methylglyoxal synthase family.

It carries out the reaction dihydroxyacetone phosphate = methylglyoxal + phosphate. Functionally, catalyzes the formation of methylglyoxal from dihydroxyacetone phosphate. The protein is Methylglyoxal synthase of Lysinibacillus sphaericus (strain C3-41).